Reading from the N-terminus, the 290-residue chain is 7-methylguanosine phosphate-specific 5'-nucleotidase B (290 aa).

The Nucleophile role is filled by aspartate 39. Residues aspartate 39 and aspartate 41 each coordinate Mg(2+). Aspartate 41 functions as the Proton donor in the catalytic mechanism. Glutamate 86 is a binding site for CMP. Glutamate 86 provides a ligand contact to N(7)-methyl-GMP. Residues 154–155 (SA) and lysine 203 each bind substrate. Aspartate 228 contributes to the Mg(2+) binding site.

It belongs to the pyrimidine 5'-nucleotidase family. As to quaternary structure, monomer.

Its subcellular location is the cytoplasm. It catalyses the reaction N(7)-methyl-GMP + H2O = N(7)-methylguanosine + phosphate. The catalysed reaction is CMP + H2O = cytidine + phosphate. It carries out the reaction a ribonucleoside 5'-phosphate + H2O = a ribonucleoside + phosphate. In terms of biological role, specifically hydrolyzes 7-methylguanosine monophosphate (m(7)GMP) to 7-methylguanosine and inorganic phosphate. The specific activity for m(7)GMP may protect cells against undesired salvage of m(7)GMP and its incorporation into nucleic acids. Also has weak activity for CMP. UMP and purine nucleotides are poor substrates. The protein is 7-methylguanosine phosphate-specific 5'-nucleotidase B (Nt5c3b-b) of Xenopus laevis (African clawed frog).